We begin with the raw amino-acid sequence, 1286 residues long: X-linked retinitis pigmentosa GTPase regulator-interacting protein 1 (1286 aa).

The segment at Gln-144–Pro-193 is disordered. Basic and acidic residues-rich tracts occupy residues Glu-159–Leu-169 and Phe-177–Val-189. Positions Lys-294–Leu-584 form a coiled coil. In terms of domain architecture, C2 spans Gly-781 to Phe-906. Disordered stretches follow at residues Ser-934–Gly-1008 and Glu-1058–Gln-1108. Basic and acidic residues-rich tracts occupy residues Ala-940–Ala-960, His-988–Gln-998, and Lys-1070–Ser-1084. The span at Glu-1085–Thr-1096 shows a compositional bias: polar residues. Residues Ser-1091 to Thr-1281 form an interaction with RPGR region.

It belongs to the RPGRIP1 family. As to quaternary structure, forms homodimers and elongated homopolymers. Interacts with RPGR. Interacts with NPHP4. Interacts with NEK4. Interacts with SPATA7. Interacts with CEP290/NPHP6; mediating the association between RPGR and CEP290/NPHP6. Strong expression in retina, with weaker expression in testis. Expressed in other neurons such as amacrine cells. Colocalizes with RGPR in the outer segment of rod photoreceptors and cone outer segments.

Its subcellular location is the cell projection. The protein localises to the cilium. In terms of biological role, may function as scaffolding protein. Required for normal location of RPGR at the connecting cilium of photoreceptor cells. Required for normal disk morphogenesis and disk organization in the outer segment of photoreceptor cells and for survival of photoreceptor cells. The protein is X-linked retinitis pigmentosa GTPase regulator-interacting protein 1 (RPGRIP1) of Homo sapiens (Human).